Reading from the N-terminus, the 537-residue chain is Putative cysteine ligase BshC (537 aa).

Positions 383–451 (MERTQKLLKQ…EVKENQDNFN (69 aa)) form a coiled coil.

Belongs to the BshC family.

Its function is as follows. Involved in bacillithiol (BSH) biosynthesis. May catalyze the last step of the pathway, the addition of cysteine to glucosamine malate (GlcN-Mal) to generate BSH. This chain is Putative cysteine ligase BshC, found in Staphylococcus haemolyticus (strain JCSC1435).